Reading from the N-terminus, the 270-residue chain is Interleukin-2 receptor subunit alpha (270 aa).

The first 21 residues, 1-21, serve as a signal peptide directing secretion; it reads MEPSLLMWGFFTFTMIPGCMA. Residues 22–84 enclose the Sushi 1 domain; that stretch reads GACVQQPPSL…FWENKCQCMP (63 aa). The Extracellular portion of the chain corresponds to 22–245; the sequence is GACVQQPPSL…QPIIFTTQYQ (224 aa). Intrachain disulfides connect cysteine 24/cysteine 67, cysteine 49/cysteine 80, and cysteine 51/cysteine 82. Residues asparagine 33 and asparagine 70 are each glycosylated (N-linked (GlcNAc...) asparagine). A disordered region spans residues 87 to 124; that stretch reads SPRIPVKQVTPRPEEQKERKTTETQGQMQPPNQANLPG. A compositionally biased stretch (basic and acidic residues) spans 98-108; sequence RPEEQKERKTT. A compositionally biased stretch (polar residues) spans 112 to 121; the sequence is GQMQPPNQAN. The Sushi 2 domain maps to 124–191; it reads GHCKEPPPWE…WTQPKLKCKS (68 aa). 2 disulfide bridges follow: cysteine 126/cysteine 171 and cysteine 153/cysteine 189. N-linked (GlcNAc...) asparagine glycans are attached at residues asparagine 164 and asparagine 195. The interval 190-225 is disordered; that stretch reads KSEKENGSFPEPQMSTAAPPTTKTSLPTRTKGTTDS. Polar residues predominate over residues 202-225; sequence QMSTAAPPTTKTSLPTRTKGTTDS. N-linked (GlcNAc...) asparagine glycosylation occurs at asparagine 227. The helical transmembrane segment at 246-264 threads the bilayer; that stretch reads LAVAGCVLLLLSILLLSGL. The Cytoplasmic portion of the chain corresponds to 265-270; that stretch reads TWQRRR.

Non-covalent dimer of an alpha and a beta subunit. IL2R exists in 3 different forms: a high affinity dimer, an intermediate affinity monomer (beta subunit), and a low affinity monomer (alpha subunit). The high and intermediate affinity forms also associate with a gamma subunit.

It localises to the membrane. Functionally, receptor for interleukin-2. The receptor is involved in the regulation of immune tolerance by controlling regulatory T cells (TREGs) activity. TREGs suppress the activation and expansion of autoreactive T-cells. This Sus scrofa (Pig) protein is Interleukin-2 receptor subunit alpha (IL2RA).